The chain runs to 910 residues: Valine--tRNA ligase (910 aa).

A 'HIGH' region motif is present at residues 46 to 56 (PNVTGSLHMGH). The 'KMSKS' region signature appears at 539-543 (KMSKS). Lys-542 contributes to the ATP binding site. Residues 845–909 (DLDILRNKIQ…QMLQERLKML (65 aa)) adopt a coiled-coil conformation.

The protein belongs to the class-I aminoacyl-tRNA synthetase family. ValS type 1 subfamily. In terms of assembly, monomer.

It localises to the cytoplasm. It catalyses the reaction tRNA(Val) + L-valine + ATP = L-valyl-tRNA(Val) + AMP + diphosphate. Its function is as follows. Catalyzes the attachment of valine to tRNA(Val). As ValRS can inadvertently accommodate and process structurally similar amino acids such as threonine, to avoid such errors, it has a 'posttransfer' editing activity that hydrolyzes mischarged Thr-tRNA(Val) in a tRNA-dependent manner. This Synechocystis sp. (strain ATCC 27184 / PCC 6803 / Kazusa) protein is Valine--tRNA ligase.